Reading from the N-terminus, the 253-residue chain is 5'/3'-nucleotidase SurE (253 aa).

Positions 8, 9, 39, and 92 each coordinate a divalent metal cation.

This sequence belongs to the SurE nucleotidase family. It depends on a divalent metal cation as a cofactor.

It is found in the cytoplasm. It carries out the reaction a ribonucleoside 5'-phosphate + H2O = a ribonucleoside + phosphate. The catalysed reaction is a ribonucleoside 3'-phosphate + H2O = a ribonucleoside + phosphate. It catalyses the reaction [phosphate](n) + H2O = [phosphate](n-1) + phosphate + H(+). Its function is as follows. Nucleotidase with a broad substrate specificity as it can dephosphorylate various ribo- and deoxyribonucleoside 5'-monophosphates and ribonucleoside 3'-monophosphates with highest affinity to 3'-AMP. Also hydrolyzes polyphosphate (exopolyphosphatase activity) with the preference for short-chain-length substrates (P20-25). Might be involved in the regulation of dNTP and NTP pools, and in the turnover of 3'-mononucleotides produced by numerous intracellular RNases (T1, T2, and F) during the degradation of various RNAs. The sequence is that of 5'/3'-nucleotidase SurE from Salmonella paratyphi B (strain ATCC BAA-1250 / SPB7).